The following is a 232-amino-acid chain: Thiamine import ATP-binding protein ThiQ (232 aa).

The region spanning L2–I230 is the ABC transporter domain. Position 32–39 (G32–S39) interacts with ATP.

The protein belongs to the ABC transporter superfamily. Thiamine importer (TC 3.A.1.19.1) family. In terms of assembly, the complex is composed of two ATP-binding proteins (ThiQ), two transmembrane proteins (ThiP) and a solute-binding protein (ThiB).

It localises to the cell inner membrane. It catalyses the reaction thiamine(out) + ATP + H2O = thiamine(in) + ADP + phosphate + H(+). Part of the ABC transporter complex ThiBPQ involved in thiamine import. Responsible for energy coupling to the transport system. The sequence is that of Thiamine import ATP-binding protein ThiQ from Escherichia coli (strain UTI89 / UPEC).